The sequence spans 305 residues: Putative monooxygenase p33MONOX (305 aa).

2 disordered regions span residues 1–20 and 37–56; these read MASR…LGKM and LEDP…VPWK. The residue at position 44 (threonine 44) is a Phosphothreonine. A Flavin-containing monooxygenase motif motif is present at residues 67–77; it reads LAKVEEGEASL. The interval 159–305 is disordered; that stretch reads SGEITKEERQ…DLNVLTPTGF (147 aa). Residues 169 to 183 show a composition bias toward low complexity; that stretch reads PASAQSTPSTTPHSS. At threonine 175 the chain carries Phosphothreonine. Serine 182 and serine 183 each carry phosphoserine. 2 stretches are compositionally biased toward polar residues: residues 191–210 and 233–243; these read WFTS…TMDS and KYDSGSSTTQA.

This sequence belongs to the P33MONOX family. In terms of assembly, interacts with NELFB, NOL12 and PRNP.

It is found in the cytoplasm. In terms of biological role, potential NADPH-dependent oxidoreductase. May be involved in the regulation of neuronal survival, differentiation and axonal outgrowth. The polypeptide is Putative monooxygenase p33MONOX (P33MONOX) (Pongo abelii (Sumatran orangutan)).